Reading from the N-terminus, the 66-residue chain is Nigrocin-2GRa (66 aa).

The signal sequence occupies residues 1 to 22; the sequence is MFTLKKSQLLLFFPGTINLSLC. Positions 23–45 are excised as a propeptide; that stretch reads QDETNAEEERRDEEVAKMEEIKR. Cysteine 60 and cysteine 66 form a disulfide bridge.

Expressed by the skin glands.

Its subcellular location is the secreted. Functionally, antimicrobial peptide active at least against the Gram-positive bacterium S.aureus but with otherwise unclear activity spectrum. Lacks hemolytic activity against rabbit or human erythrocytes. In Odorrana grahami (Yunnanfu frog), this protein is Nigrocin-2GRa.